The chain runs to 153 residues: 6,7-dimethyl-8-ribityllumazine synthase (153 aa).

Residues Phe21, 55–57, and 79–81 each bind 5-amino-6-(D-ribitylamino)uracil; these read AFE and TVI. Position 84 to 85 (84 to 85) interacts with (2S)-2-hydroxy-3-oxobutyl phosphate; that stretch reads AT. His87 functions as the Proton donor in the catalytic mechanism. Phe112 serves as a coordination point for 5-amino-6-(D-ribitylamino)uracil. Arg126 is a binding site for (2S)-2-hydroxy-3-oxobutyl phosphate.

Belongs to the DMRL synthase family. As to quaternary structure, forms an icosahedral capsid composed of 60 subunits, arranged as a dodecamer of pentamers.

The enzyme catalyses (2S)-2-hydroxy-3-oxobutyl phosphate + 5-amino-6-(D-ribitylamino)uracil = 6,7-dimethyl-8-(1-D-ribityl)lumazine + phosphate + 2 H2O + H(+). It participates in cofactor biosynthesis; riboflavin biosynthesis; riboflavin from 2-hydroxy-3-oxobutyl phosphate and 5-amino-6-(D-ribitylamino)uracil: step 1/2. Catalyzes the formation of 6,7-dimethyl-8-ribityllumazine by condensation of 5-amino-6-(D-ribitylamino)uracil with 3,4-dihydroxy-2-butanone 4-phosphate. This is the penultimate step in the biosynthesis of riboflavin. The polypeptide is 6,7-dimethyl-8-ribityllumazine synthase (Bacillus anthracis (strain A0248)).